A 173-amino-acid chain; its full sequence is RNA silencing suppressor p19 (173 aa).

A compositionally biased stretch (basic and acidic residues) spans 1-21 (MERAIQRSDAREQANSERWDG). The tract at residues 1-34 (MERAIQRSDAREQANSERWDGRCGGTITPFKLPD) is disordered.

This sequence belongs to the tombusvirus protein p19 family. As to quaternary structure, homodimer.

Its function is as follows. Viral suppressor of RNA silencing which binds specifically to silencing RNAs (siRNAs). Acts as a molecular caliper to specifically select siRNAs based on the length of the duplex region of the RNA. The protein is RNA silencing suppressor p19 of Cucumis sativus (Cucumber).